A 195-amino-acid chain; its full sequence is Glycine-rich protein A3 (195 aa).

2 disordered regions span residues 23–103 (AGGG…GVAG) and 159–182 (VMESLSRESTGRARSTDTRSGSNL). A compositionally biased stretch (gly residues) spans 47–77 (PAGGGYPPQGYPPAGGGYPPQGYPPAGGGYP). A compositionally biased stretch (low complexity) spans 82–94 (PPAGHHSGSSAPH). A compositionally biased stretch (basic and acidic residues) spans 163 to 175 (LSRESTGRARSTD).

The protein is Glycine-rich protein A3 of Daucus carota (Wild carrot).